Reading from the N-terminus, the 644-residue chain is Exoribonuclease 2 (644 aa).

The RNB domain maps to 189-516 (RRDLTALDFV…NHRLLKAIIK (328 aa)). Positions 561–643 (DTRFAAEIID…ETRSIIARPA (83 aa)) constitute an S1 motif domain.

The protein belongs to the RNR ribonuclease family. RNase II subfamily.

It localises to the cytoplasm. The catalysed reaction is Exonucleolytic cleavage in the 3'- to 5'-direction to yield nucleoside 5'-phosphates.. Functionally, involved in mRNA degradation. Hydrolyzes single-stranded polyribonucleotides processively in the 3' to 5' direction. The protein is Exoribonuclease 2 of Klebsiella pneumoniae subsp. pneumoniae (strain ATCC 700721 / MGH 78578).